The primary structure comprises 260 residues: ATP synthase subunit a (260 aa).

The next 7 helical transmembrane spans lie at 30–50 (IAFT…IVFV), 96–116 (LFAF…LVGV), 125–145 (FTVT…VGFA), 151–171 (FFSL…IFPI), 187–207 (LFVA…FVIS), 213–233 (VGTF…ICAL), and 234–254 (ELLV…VYLN).

Belongs to the ATPase A chain family. F-type ATPases have 2 components, CF(1) - the catalytic core - and CF(0) - the membrane proton channel. CF(1) has five subunits: alpha(3), beta(3), gamma(1), delta(1), epsilon(1). CF(0) has three main subunits: a(1), b(2) and c(9-12). The alpha and beta chains form an alternating ring which encloses part of the gamma chain. CF(1) is attached to CF(0) by a central stalk formed by the gamma and epsilon chains, while a peripheral stalk is formed by the delta and b chains.

It is found in the cell inner membrane. Its function is as follows. Key component of the proton channel; it plays a direct role in the translocation of protons across the membrane. This chain is ATP synthase subunit a, found in Novosphingobium aromaticivorans (strain ATCC 700278 / DSM 12444 / CCUG 56034 / CIP 105152 / NBRC 16084 / F199).